The sequence spans 481 residues: 3-isopropylmalate dehydratase large subunit (481 aa).

[4Fe-4S] cluster is bound by residues Cys363, Cys423, and Cys426. The interval 434–465 (LRPGQRAASTSNRNFEGRQGRGGRTHLVSPPV) is disordered.

It belongs to the aconitase/IPM isomerase family. LeuC type 1 subfamily. In terms of assembly, heterodimer of LeuC and LeuD. [4Fe-4S] cluster serves as cofactor.

It catalyses the reaction (2R,3S)-3-isopropylmalate = (2S)-2-isopropylmalate. Its pathway is amino-acid biosynthesis; L-leucine biosynthesis; L-leucine from 3-methyl-2-oxobutanoate: step 2/4. Catalyzes the isomerization between 2-isopropylmalate and 3-isopropylmalate, via the formation of 2-isopropylmaleate. This chain is 3-isopropylmalate dehydratase large subunit, found in Salinispora tropica (strain ATCC BAA-916 / DSM 44818 / JCM 13857 / NBRC 105044 / CNB-440).